Reading from the N-terminus, the 78-residue chain is Large ribosomal subunit protein uL23 (78 aa).

Belongs to the universal ribosomal protein uL23 family. In terms of assembly, part of the 50S ribosomal subunit. Contacts protein L29.

Its function is as follows. Binds to 23S rRNA. One of the proteins that surrounds the polypeptide exit tunnel on the outside of the ribosome. The chain is Large ribosomal subunit protein uL23 from Nanoarchaeum equitans (strain Kin4-M).